Reading from the N-terminus, the 324-residue chain is Phospho-N-acetylmuramoyl-pentapeptide-transferase (324 aa).

9 helical membrane-spanning segments follow: residues 5-25 (VILF…PIFI), 51-71 (TPTM…IVMI), 77-97 (ISPE…LGFL), 117-137 (LIGQ…YQFA), 147-167 (VSFD…VGGS), 176-196 (LDGL…ILAW), 203-223 (VAIF…FNAH), 227-248 (VFMG…AILT), and 302-322 (VVVT…YIEV).

Belongs to the glycosyltransferase 4 family. MraY subfamily. The cofactor is Mg(2+).

The protein localises to the cell membrane. The catalysed reaction is UDP-N-acetyl-alpha-D-muramoyl-L-alanyl-gamma-D-glutamyl-meso-2,6-diaminopimeloyl-D-alanyl-D-alanine + di-trans,octa-cis-undecaprenyl phosphate = di-trans,octa-cis-undecaprenyl diphospho-N-acetyl-alpha-D-muramoyl-L-alanyl-D-glutamyl-meso-2,6-diaminopimeloyl-D-alanyl-D-alanine + UMP. Its pathway is cell wall biogenesis; peptidoglycan biosynthesis. Catalyzes the initial step of the lipid cycle reactions in the biosynthesis of the cell wall peptidoglycan: transfers peptidoglycan precursor phospho-MurNAc-pentapeptide from UDP-MurNAc-pentapeptide onto the lipid carrier undecaprenyl phosphate, yielding undecaprenyl-pyrophosphoryl-MurNAc-pentapeptide, known as lipid I. This is Phospho-N-acetylmuramoyl-pentapeptide-transferase from Bacillus pumilus (strain SAFR-032).